The primary structure comprises 85 residues: Arminin 524 (85 aa).

An N-terminal signal peptide occupies residues 1–18 (MKAVFAILFLAFIALTYA). Positions 19-57 (KSYDEVKEEIKNEVEREIFEDLEEESDELDNDVEEFNDA) are excised as a propeptide. Position 82 is an alanine amide (Ala82).

Belongs to the arminin family. As to expression, expressed in entodermal epithelium along the body column.

It localises to the secreted. The protein resides in the target cell membrane. In terms of biological role, antimicrobial peptide with a broad-spectrum antimicrobial activity. Keeps its antibacterial activity under a wide range of salt concentrations that mimic physiological conditions of human blood, which is surprising, since Hydra is an obligate freshwater animal with nearly no salt tolerance. Does not affect red blood cells. In Hydra oligactis (Brown hydra), this protein is Arminin 524.